Reading from the N-terminus, the 501-residue chain is ADP,ATP carrier protein 3 (501 aa).

The next 12 helical transmembrane spans lie at 23-43 (LKLF…FGAL), 59-79 (IISF…TVLY), 90-110 (YIFY…AYII), 146-166 (YALM…LMFW), 183-203 (PVLG…LVFF), 227-247 (IILQ…MFLF), 293-313 (IALL…PWKA), 326-346 (VNFM…FMII), 361-381 (LLTP…IIFI), 383-403 (EIGT…VGAI), 446-466 (FGKS…PTAT), and 470-490 (IIIY…WNII).

This sequence belongs to the ADP/ATP translocase tlc family.

It localises to the cell membrane. Its function is as follows. Provides the rickettsial cell with host ATP in exchange for rickettsial ADP. This is an obligate exchange system. This energy acquiring activity is an important component of rickettsial parasitism. The polypeptide is ADP,ATP carrier protein 3 (tlcC) (Rickettsia typhi (strain ATCC VR-144 / Wilmington)).